Here is a 218-residue protein sequence, read N- to C-terminus: Small ribosomal subunit protein uS3 (218 aa).

In terms of domain architecture, KH type-2 spans 40 to 109 (IRKIINTEYS…DVSINIREVK (70 aa)).

The protein belongs to the universal ribosomal protein uS3 family. In terms of assembly, part of the 30S ribosomal subunit. Forms a tight complex with proteins S10 and S14.

Binds the lower part of the 30S subunit head. Binds mRNA in the 70S ribosome, positioning it for translation. This chain is Small ribosomal subunit protein uS3, found in Orientia tsutsugamushi (strain Boryong) (Rickettsia tsutsugamushi).